A 395-amino-acid polypeptide reads, in one-letter code: Levanbiose-producing levanase (395 aa).

The active site involves aspartate 1. Substrate contacts are provided by residues 59-60 (WT), 124-125 (RD), glutamate 173, and tryptophan 261.

Belongs to the glycosyl hydrolase 32 family.

The protein localises to the membrane. It catalyses the reaction Hydrolysis of (2-&gt;6)-beta-D-fructofuranan, to remove successive disaccharide residues as levanbiose, i.e. 6-(beta-D-fructofuranosyl)-D-fructose, from the end of the chain.. Catalyzes the degradation of levan mainly into levanbiose (difructose). Can also hydrolyze inulin. The polypeptide is Levanbiose-producing levanase (levB) (Geobacillus stearothermophilus (Bacillus stearothermophilus)).